The sequence spans 156 residues: Cyclic pyranopterin monophosphate synthase (156 aa).

Residues Leu-73–His-75 and Met-110–Glu-111 contribute to the substrate site. Asp-125 is an active-site residue.

This sequence belongs to the MoaC family. As to quaternary structure, homohexamer; trimer of dimers.

It carries out the reaction (8S)-3',8-cyclo-7,8-dihydroguanosine 5'-triphosphate = cyclic pyranopterin phosphate + diphosphate. It participates in cofactor biosynthesis; molybdopterin biosynthesis. Catalyzes the conversion of (8S)-3',8-cyclo-7,8-dihydroguanosine 5'-triphosphate to cyclic pyranopterin monophosphate (cPMP). The protein is Cyclic pyranopterin monophosphate synthase of Pseudomonas entomophila (strain L48).